Here is a 296-residue protein sequence, read N- to C-terminus: tRNA dimethylallyltransferase (296 aa).

Glycine 11–threonine 18 serves as a coordination point for ATP. Threonine 13–threonine 18 provides a ligand contact to substrate. Residues aspartate 36 to glutamine 39 form an interaction with substrate tRNA region.

It belongs to the IPP transferase family. In terms of assembly, monomer. Requires Mg(2+) as cofactor.

The enzyme catalyses adenosine(37) in tRNA + dimethylallyl diphosphate = N(6)-dimethylallyladenosine(37) in tRNA + diphosphate. Catalyzes the transfer of a dimethylallyl group onto the adenine at position 37 in tRNAs that read codons beginning with uridine, leading to the formation of N6-(dimethylallyl)adenosine (i(6)A). In Streptococcus agalactiae serotype Ia (strain ATCC 27591 / A909 / CDC SS700), this protein is tRNA dimethylallyltransferase.